Reading from the N-terminus, the 32-residue chain is Photosystem II reaction center protein Z (32 aa).

Residues 9–31 (FILIGSASWAALVLLVGSLNSFV) traverse the membrane as a helical segment.

The protein belongs to the PsbZ family. As to quaternary structure, PSII is composed of 1 copy each of membrane proteins PsbA, PsbB, PsbC, PsbD, PsbE, PsbF, PsbH, PsbI, PsbJ, PsbK, PsbL, PsbM, PsbT, PsbY, PsbZ, Psb30/Ycf12, at least 3 peripheral proteins of the oxygen-evolving complex and a large number of cofactors. It forms dimeric complexes.

The protein resides in the plastid. The protein localises to the chloroplast thylakoid membrane. Functionally, may control the interaction of photosystem II (PSII) cores with the light-harvesting antenna, regulates electron flow through the 2 photosystem reaction centers. PSII is a light-driven water plastoquinone oxidoreductase, using light energy to abstract electrons from H(2)O, generating a proton gradient subsequently used for ATP formation. This chain is Photosystem II reaction center protein Z, found in Euglena viridis (Cercaria viridis).